The sequence spans 436 residues: MFESKINPLWQSFILAVQEEVKPALGCTEPISLALAAAAAAAELDGTVERIDAWVSPNLMKNGMGVTVPGTGMVGLPIAAALGALGGDAKAGLEVLKDASAKAVADAKAMLAAGHVAVMLQEPCNDILFSRAKVYSGDSWACVTIVGDHTNIVRIETDKGVVFTQADNAQEEEKTSPLGVLSHTSLEEILAFVNAVPFDAIRFILDAARLNGALSQEGLRGSWGLHIGSTLAKQCDRGLLAKDLSTAILIRTSAASDARMGGATLPAMSNSGSGNQGITATVPVMVVAEHVGADDECLARALMLSHLSAIYIHHQLPRLSALCAATTAAMGAAAGMAWLIDGRYDTIAMAISSMIGDVSGMICDGASNSCAMKVSTSASAAWKAVLMALDDTAVTGNEGIVAHNVEQSISNLCSLACRSMQQTDKQIIEIMASKAH.

This sequence belongs to the UPF0597 family.

This Salmonella typhi protein is UPF0597 protein YhaM.